A 741-amino-acid polypeptide reads, in one-letter code: Mitofusin-1 (741 aa).

Residues 1–584 (MAETVSPLKH…AAQEELMITL (584 aa)) are Cytoplasmic-facing. A part of a helix bundle domain, formed by helices from N-terminal and C-terminal regions region spans residues 9–73 (KHFVLAKKAI…LAVIGEVLSR (65 aa)). The Dynamin-type G domain occupies 72–321 (SRRHMKVAFF…ARLQEFQNFE (250 aa)). The interval 82-89 (GRTSSGKS) is G1 motif. Residue 85–90 (SSGKSS) participates in GTP binding. The G2 motif stretch occupies residues 108 to 109 (TT). Positions 178 to 181 (DSPG) are G3 motif. Residue 237–240 (NRWD) coordinates GTP. The tract at residues 237 to 240 (NRWD) is G4 motif. Residue E266 is a region of interest, G5 motif. Positions 284 and 286 each coordinate GTP. The interval 338-364 (EQHTIRAKQILDTVKNILDSVNVAAAE) is part of a helix bundle domain, formed by helices from N-terminal and C-terminal regions. Residues 371–408 (EEREDQIDRLDFIRNQMNLLTLDVKKKIKEVTEEVANK) adopt a coiled-coil conformation. A helical membrane pass occupies residues 585-605 (ITGLASLTSRTSMGIIVVGGV). Topologically, residues 606–608 (IWK) are mitochondrial intermembrane. Residues 609–629 (TVGWKLISVTLSMYGALYLYE) form a helical membrane-spanning segment. Residues 630-741 (RLTWTTRAKE…QFLHPSSGES (112 aa)) are Cytoplasmic-facing. A coiled-coil region spans residues 677–735 (FARLCQQVDVTQKHLEEEIARLSKEIDQLEKIQNNSKLLRNKAVQLESELENFSKQFLH). The interval 703–734 (DQLEKIQNNSKLLRNKAVQLESELENFSKQFL) is part of a helix bundle domain, formed by helices from N-terminal and C-terminal regions.

The protein belongs to the TRAFAC class dynamin-like GTPase superfamily. Dynamin/Fzo/YdjA family. Mitofusin subfamily. As to quaternary structure, homodimer, also in the absence of bound GTP. Forms higher oligomers in the presence of a transition state GTP analog. Forms homomultimers and heteromultimers with MFN2. Oligomerization is essential for mitochondrion fusion. Component of a high molecular weight multiprotein complex. Interacts with VAT1. Interacts with THG1L; THG1L probably functions as a guanyl-nucleotide exchange factor/GEF, activating MFN1. Post-translationally, ubiquitinated by MARCHF5. When mitochondria are depolarized and dysfunctional, it is ubiquitinated by a SCF (SKP1-CUL1-F-box protein) E3 ubiquitin-protein ligase complex that contains FBXO7 and PRKN. Ubiquitinated by non-degradative ubiquitin by PRKN, promoting mitochondrial fusion; deubiquitination by USP30 inhibits mitochondrial fusion. As to expression, detected in adult heart. Detected in embryos (at protein level). Widely expressed.

It localises to the mitochondrion outer membrane. It catalyses the reaction GTP + H2O = GDP + phosphate + H(+). Functionally, mitochondrial outer membrane GTPase that mediates mitochondrial clustering and fusion. Membrane clustering requires GTPase activity. It may involve a major rearrangement of the coiled coil domains. Mitochondria are highly dynamic organelles, and their morphology is determined by the equilibrium between mitochondrial fusion and fission events. Overexpression induces the formation of mitochondrial networks (in vitro). Has low GTPase activity. This chain is Mitofusin-1 (Mfn1), found in Mus musculus (Mouse).